We begin with the raw amino-acid sequence, 110 residues long: Replication initiation control protein YabA (110 aa).

4 residues coordinate Zn(2+): H84, C86, C100, and C103.

It belongs to the YabA family. In terms of assembly, homotetramer. Interacts with both DnaA and DnaN, acting as a bridge between these two proteins. Requires Zn(2+) as cofactor.

The protein resides in the cytoplasm. It is found in the nucleoid. Functionally, involved in control of chromosome replication initiation. Inhibits the cooperative binding of DnaA to the oriC region, thus negatively regulating initiation of chromosome replication. Inhibits the ability of DnaA-ATP to form a helix on DNA; does not disassemble preformed DnaA-DNA helices. Decreases the residence time of DnaA on the chromosome at its binding sites (oriC, replication forks and promoter-binding sites). Tethers DnaA to the replication machinery via the DNA polymerase beta sliding clamp subunit (dnaN). Associates with oriC and other DnaA targets on the chromosome in a DnaA-dependent manner. The protein is Replication initiation control protein YabA of Streptococcus mutans serotype c (strain ATCC 700610 / UA159).